Consider the following 232-residue polypeptide: Large ribosomal subunit protein uL1 (232 aa).

Belongs to the universal ribosomal protein uL1 family. As to quaternary structure, part of the 50S ribosomal subunit.

Functionally, binds directly to 23S rRNA. The L1 stalk is quite mobile in the ribosome, and is involved in E site tRNA release. In terms of biological role, protein L1 is also a translational repressor protein, it controls the translation of the L11 operon by binding to its mRNA. This is Large ribosomal subunit protein uL1 from Christiangramia forsetii (strain DSM 17595 / CGMCC 1.15422 / KT0803) (Gramella forsetii).